The primary structure comprises 509 residues: Putative cytochrome P450 CYP13A8 (509 aa).

Cys-455 is a binding site for heme.

It belongs to the cytochrome P450 family. Heme is required as a cofactor.

Cytochromes P450 are a group of heme-thiolate monooxygenases. They oxidize a variety of structurally unrelated compounds, including steroids, fatty acids, and xenobiotics. This Caenorhabditis elegans protein is Putative cytochrome P450 CYP13A8 (cyp-13A8).